Consider the following 294-residue polypeptide: Syntaxin-19 (294 aa).

The t-SNARE coiled-coil homology domain maps to Leu209–Ala271.

This sequence belongs to the syntaxin family. Interacts with EGFR.

It localises to the cell membrane. It is found in the cytoplasm. Plays a role in endosomal trafficking of the epidermal growth factor receptor (EGFR). The sequence is that of Syntaxin-19 (STX19) from Pongo abelii (Sumatran orangutan).